The primary structure comprises 460 residues: Ufm1-specific protease 2 (460 aa).

Catalysis depends on residues C293, D417, and H419.

This sequence belongs to the peptidase C78 family.

Its subcellular location is the endoplasmic reticulum. The protein resides in the cytoplasm. The protein localises to the nucleus. Functionally, thiol-dependent isopeptidase that specifically cleaves UFM1, a ubiquitin-like modifier protein, from conjugated proteins. While it is also able to mediate the processing of UFM1 precursors, a prerequisite for conjugation reactions, UFSP2 mainly acts as a protein deUFMylase that mediates deconjugation of UFM1 from target proteins. The polypeptide is Ufm1-specific protease 2 (Gallus gallus (Chicken)).